Consider the following 339-residue polypeptide: Starvation-sensing protein RspB (339 aa).

Zn(2+) is bound by residues C37, H59, C89, C92, C95, C103, and E144.

Belongs to the zinc-containing alcohol dehydrogenase family. Requires Zn(2+) as cofactor.

Not known; probable catabolic enzyme. This is Starvation-sensing protein RspB from Escherichia coli (strain K12).